A 364-amino-acid chain; its full sequence is DNA replication and repair protein RecF (364 aa).

ATP is bound at residue 30–37; it reads GKNAQGKT.

It belongs to the RecF family.

Its subcellular location is the cytoplasm. The RecF protein is involved in DNA metabolism; it is required for DNA replication and normal SOS inducibility. RecF binds preferentially to single-stranded, linear DNA. It also seems to bind ATP. This chain is DNA replication and repair protein RecF, found in Geotalea uraniireducens (strain Rf4) (Geobacter uraniireducens).